A 63-amino-acid polypeptide reads, in one-letter code: Small ribosomal subunit protein eS31 (63 aa).

The Zn(2+) site is built by C31, C34, C50, and C53.

Belongs to the eukaryotic ribosomal protein eS31 family. As to quaternary structure, part of the 30S ribosomal subunit. The cofactor is Zn(2+).

This is Small ribosomal subunit protein eS31 (rps27ae) from Aeropyrum pernix (strain ATCC 700893 / DSM 11879 / JCM 9820 / NBRC 100138 / K1).